A 233-amino-acid chain; its full sequence is Outer membrane protein MIP (233 aa).

The N-terminal stretch at 1–20 (MKMKLVTAAVMGLAMSTAMA) is a signal peptide. The PPIase FKBP-type domain maps to 144 to 233 (SDTVTVEYTG…IHLISVKKSS (90 aa)).

This sequence belongs to the FKBP-type PPIase family.

Its subcellular location is the cell outer membrane. The enzyme catalyses [protein]-peptidylproline (omega=180) = [protein]-peptidylproline (omega=0). Functionally, essential virulence factor associated with macrophage infectivity. Exhibits PPIase activity. The sequence is that of Outer membrane protein MIP (mip) from Legionella pneumophila (strain Corby).